The sequence spans 72 residues: Translation initiation factor IF-1 (72 aa).

The region spanning 1 to 72 (MSKQTAIEQD…TKGRISFRYK (72 aa)) is the S1-like domain.

Belongs to the IF-1 family. In terms of assembly, component of the 30S ribosomal translation pre-initiation complex which assembles on the 30S ribosome in the order IF-2 and IF-3, IF-1 and N-formylmethionyl-tRNA(fMet); mRNA recruitment can occur at any time during PIC assembly.

The protein resides in the cytoplasm. Its function is as follows. One of the essential components for the initiation of protein synthesis. Stabilizes the binding of IF-2 and IF-3 on the 30S subunit to which N-formylmethionyl-tRNA(fMet) subsequently binds. Helps modulate mRNA selection, yielding the 30S pre-initiation complex (PIC). Upon addition of the 50S ribosomal subunit IF-1, IF-2 and IF-3 are released leaving the mature 70S translation initiation complex. This chain is Translation initiation factor IF-1, found in Porphyromonas gingivalis (strain ATCC BAA-308 / W83).